Here is a 946-residue protein sequence, read N- to C-terminus: DNA ligase 4 (946 aa).

ATP-binding residues include Glu295, Lys297, Arg302, Glu355, Phe397, Glu457, Lys462, Lys479, and Lys481. Lys297 functions as the N6-AMP-lysine intermediate in the catalytic mechanism. A Mg(2+)-binding site is contributed by Glu355. Glu457 lines the Mg(2+) pocket. BRCT domains are found at residues 688–787 and 845–945; these read HRSD…PSHC and VPHF…NYRL.

It belongs to the ATP-dependent DNA ligase family. Requires Mg(2+) as cofactor.

The protein resides in the nucleus. It carries out the reaction ATP + (deoxyribonucleotide)n-3'-hydroxyl + 5'-phospho-(deoxyribonucleotide)m = (deoxyribonucleotide)n+m + AMP + diphosphate.. Functionally, DNA ligase involved in DNA non-homologous end joining (NHEJ); required for double-strand break (DSB) repair. The protein is DNA ligase 4 (LIG4) of Candida glabrata (strain ATCC 2001 / BCRC 20586 / JCM 3761 / NBRC 0622 / NRRL Y-65 / CBS 138) (Yeast).